The sequence spans 225 residues: Histone H3-like centromeric protein cid (225 aa).

Residues 1-11 (MPRHSRAKRAP) are compositionally biased toward basic residues. Positions 1-131 (MPRHSRAKRA…KAANPMSRAK (131 aa)) are disordered. Over residues 43-52 (FTTSQLTLQD) the composition is skewed to polar residues. Phosphoserine occurs at positions 74 and 75. A Phosphothreonine modification is found at Thr76. Ser77 carries the post-translational modification Phosphoserine. The span at 86 to 103 (RYPTTRSPQTRRMTVQQE) shows a compositional bias: polar residues. Positions 133-225 (MDREIRRLQH…AYICDRGRQF (93 aa)) are H3-like.

The protein belongs to the histone H3 family. In terms of assembly, forms a nucleosome-like histone octamer containing two molecules each of H2A, H2B, cid and H4 assembled in one cid-H4 heterotetramer and two H2A-H2B heterodimers. The cid-H4 heterotetramer is more compact and structurally more rigid than corresponding H3-H4 heterotetramers. Interacts with the condensin subunit Cap-G. Interacts with Chrac-14.

It localises to the nucleus. The protein localises to the chromosome. Its subcellular location is the centromere. The protein resides in the kinetochore. Histone H3-like variant which exclusively replaces conventional H3 in the nucleosome core of centromeric chromatin at the inner plate of the kinetochore. Required for recruitment and assembly of kinetochore proteins, mitotic progression and chromosome segregation. May serve as an epigenetic mark that propagates centromere identity through replication and cell division. The chain is Histone H3-like centromeric protein cid from Drosophila melanogaster (Fruit fly).